The chain runs to 210 residues: MANILYITCNLKPREQSRSLTIGNEFLKRYSERHPEDRIDFLDLYRDPIQRIDTDVLNGWGKLRTGASFDLLSEDEVRKIGRIGALADQFVATDKYVFVTPMWNLGFPAELKMYIDTVCVVGKTFTYTESGAVGLLRGMGKKCLHIHSCGGFHCGSADDHSVPYLKSVMNFMGIEDFRSVVVEGMDALPHRAEEFMDKALAESREAAALF.

Residues 17 to 19, 102 to 105, and 148 to 151 contribute to the FMN site; these read SRS, MWNL, and SCGG.

Belongs to the azoreductase type 1 family. As to quaternary structure, homodimer. It depends on FMN as a cofactor.

The catalysed reaction is 2 a quinone + NADH + H(+) = 2 a 1,4-benzosemiquinone + NAD(+). It catalyses the reaction N,N-dimethyl-1,4-phenylenediamine + anthranilate + 2 NAD(+) = 2-(4-dimethylaminophenyl)diazenylbenzoate + 2 NADH + 2 H(+). Functionally, quinone reductase that provides resistance to thiol-specific stress caused by electrophilic quinones. Also exhibits azoreductase activity. Catalyzes the reductive cleavage of the azo bond in aromatic azo compounds to the corresponding amines. This is FMN-dependent NADH:quinone oxidoreductase from Trichlorobacter lovleyi (strain ATCC BAA-1151 / DSM 17278 / SZ) (Geobacter lovleyi).